Here is a 157-residue protein sequence, read N- to C-terminus: Putative tRNA (cytidine(34)-2'-O)-methyltransferase (157 aa).

3 residues coordinate S-adenosyl-L-methionine: isoleucine 79, glycine 104, and isoleucine 125.

Belongs to the class IV-like SAM-binding methyltransferase superfamily. RNA methyltransferase TrmH family. TrmL subfamily.

The protein resides in the cytoplasm. The catalysed reaction is cytidine(34) in tRNA + S-adenosyl-L-methionine = 2'-O-methylcytidine(34) in tRNA + S-adenosyl-L-homocysteine + H(+). The enzyme catalyses 5-carboxymethylaminomethyluridine(34) in tRNA(Leu) + S-adenosyl-L-methionine = 5-carboxymethylaminomethyl-2'-O-methyluridine(34) in tRNA(Leu) + S-adenosyl-L-homocysteine + H(+). In terms of biological role, could methylate the ribose at the nucleotide 34 wobble position in tRNA. In Geobacillus stearothermophilus (Bacillus stearothermophilus), this protein is Putative tRNA (cytidine(34)-2'-O)-methyltransferase.